We begin with the raw amino-acid sequence, 276 residues long: Mitochondrial distribution and morphology protein 12 (276 aa).

The region spanning 1–276 (MSIDIQWNLL…FVWPSYFTLY (276 aa)) is the SMP-LTD domain. A disordered region spans residues 68 to 104 (TLYSDDSSSLDDEESDREEENMTELPPYGATENGVHK). The span at 75–89 (SSLDDEESDREEENM) shows a compositional bias: acidic residues.

Belongs to the MDM12 family. In terms of assembly, component of the ER-mitochondria encounter structure (ERMES) or MDM complex, composed of mmm1, mdm10, mdm12 and mdm34. A mmm1 homodimer associates with one molecule of mdm12 on each side in a pairwise head-to-tail manner, and the SMP-LTD domains of mmm1 and mdm12 generate a continuous hydrophobic tunnel for phospholipid trafficking.

The protein localises to the mitochondrion outer membrane. Its subcellular location is the endoplasmic reticulum membrane. In terms of biological role, component of the ERMES/MDM complex, which serves as a molecular tether to connect the endoplasmic reticulum (ER) and mitochondria. Components of this complex are involved in the control of mitochondrial shape and protein biogenesis, and function in nonvesicular lipid trafficking between the ER and mitochondria. Mdm12 is required for the interaction of the ER-resident membrane protein mmm1 and the outer mitochondrial membrane-resident beta-barrel protein mdm10. The mdm12-mmm1 subcomplex functions in the major beta-barrel assembly pathway that is responsible for biogenesis of all mitochondrial outer membrane beta-barrel proteins, and acts in a late step after the SAM complex. The mdm10-mdm12-mmm1 subcomplex further acts in the TOM40-specific pathway after the action of the mdm12-mmm1 complex. Essential for establishing and maintaining the structure of mitochondria and maintenance of mtDNA nucleoids. This is Mitochondrial distribution and morphology protein 12 from Schizosaccharomyces japonicus (strain yFS275 / FY16936) (Fission yeast).